The chain runs to 272 residues: Ribosomal RNA small subunit methyltransferase A (272 aa).

6 residues coordinate S-adenosyl-L-methionine: asparagine 18, leucine 20, glycine 45, glutamate 66, aspartate 91, and asparagine 113.

This sequence belongs to the class I-like SAM-binding methyltransferase superfamily. rRNA adenine N(6)-methyltransferase family. RsmA subfamily.

The protein localises to the cytoplasm. The catalysed reaction is adenosine(1518)/adenosine(1519) in 16S rRNA + 4 S-adenosyl-L-methionine = N(6)-dimethyladenosine(1518)/N(6)-dimethyladenosine(1519) in 16S rRNA + 4 S-adenosyl-L-homocysteine + 4 H(+). Functionally, specifically dimethylates two adjacent adenosines (A1518 and A1519) in the loop of a conserved hairpin near the 3'-end of 16S rRNA in the 30S particle. May play a critical role in biogenesis of 30S subunits. The chain is Ribosomal RNA small subunit methyltransferase A from Serratia proteamaculans (strain 568).